Consider the following 136-residue polypeptide: UPF0225 protein Mpe_A2093 (136 aa).

It belongs to the UPF0225 family.

This Methylibium petroleiphilum (strain ATCC BAA-1232 / LMG 22953 / PM1) protein is UPF0225 protein Mpe_A2093.